Reading from the N-terminus, the 397-residue chain is Argininosuccinate synthase (397 aa).

8–16 (AYSGGLDTS) is an ATP binding site. The L-citrulline site is built by tyrosine 86 and serine 91. Glycine 116 is an ATP binding site. L-aspartate is bound by residues threonine 118, asparagine 122, and aspartate 123. Residue asparagine 122 coordinates L-citrulline. L-citrulline contacts are provided by arginine 126, serine 175, serine 184, glutamate 260, and tyrosine 272.

The protein belongs to the argininosuccinate synthase family. Type 1 subfamily. As to quaternary structure, homotetramer.

It localises to the cytoplasm. It catalyses the reaction L-citrulline + L-aspartate + ATP = 2-(N(omega)-L-arginino)succinate + AMP + diphosphate + H(+). It participates in amino-acid biosynthesis; L-arginine biosynthesis; L-arginine from L-ornithine and carbamoyl phosphate: step 2/3. This chain is Argininosuccinate synthase, found in Clostridium botulinum (strain Kyoto / Type A2).